We begin with the raw amino-acid sequence, 118 residues long: NADH-quinone oxidoreductase subunit A (118 aa).

Helical transmembrane passes span 6–26, 64–84, and 87–107; these read LPVL…LLMG, AILF…AVVF, and IGMT…VGFI.

It belongs to the complex I subunit 3 family. NDH-1 is composed of 14 different subunits. Subunits NuoA, H, J, K, L, M, N constitute the membrane sector of the complex.

It is found in the cell inner membrane. The enzyme catalyses a quinone + NADH + 5 H(+)(in) = a quinol + NAD(+) + 4 H(+)(out). NDH-1 shuttles electrons from NADH, via FMN and iron-sulfur (Fe-S) centers, to quinones in the respiratory chain. The immediate electron acceptor for the enzyme in this species is believed to be ubiquinone. Couples the redox reaction to proton translocation (for every two electrons transferred, four hydrogen ions are translocated across the cytoplasmic membrane), and thus conserves the redox energy in a proton gradient. The polypeptide is NADH-quinone oxidoreductase subunit A (Acidithiobacillus ferrooxidans (strain ATCC 53993 / BNL-5-31) (Leptospirillum ferrooxidans (ATCC 53993))).